A 254-amino-acid chain; its full sequence is Major prion protein (254 aa).

The N-terminal stretch at 1–22 (MANLGYWLLALFVATWTDVGLC) is a signal peptide. The interval 23 to 231 (KKRPKPGGWN…SQAYYDGRRS (209 aa)) is interaction with GRB2, ERI3 and SYN1. The interval 25–107 (RPKPGGWNTG…QWNKPSKPKT (83 aa)) is disordered. Tandem repeats lie at residues 51 to 59 (PQGGGTWGQ), 60 to 67 (PHGGGWGQ), 68 to 75 (PHGGGWGQ), 76 to 83 (PHGGGWGQ), and 84 to 91 (PHGGGWGQ). The interval 51–91 (PQGGGTWGQPHGGGWGQPHGGGWGQPHGGGWGQPHGGGWGQ) is 5 X 8 AA tandem repeats of P-H-G-G-G-W-G-Q. Residues 52-95 (QGGGTWGQPHGGGWGQPHGGGWGQPHGGGWGQPHGGGWGQGGGT) show a composition bias toward gly residues. Cu(2+) contacts are provided by His-61, Gly-62, Gly-63, His-69, Gly-70, Gly-71, His-77, Gly-78, Gly-79, His-85, Gly-86, and Gly-87. Cysteines 179 and 214 form a disulfide. Residues Asn-181 and Asn-197 are each glycosylated (N-linked (GlcNAc...) asparagine). Residue Ser-231 is the site of GPI-anchor amidated serine attachment. The propeptide at 232 to 254 (SAVLFSSPPMILLISFLIFLIVG) is removed in mature form.

Belongs to the prion family. As to quaternary structure, monomer and homodimer. Has a tendency to aggregate into amyloid fibrils containing a cross-beta spine, formed by a steric zipper of superposed beta-strands. Soluble oligomers may represent an intermediate stage on the path to fibril formation. Copper binding may promote oligomerization. Interacts with GRB2, APP, ERI3/PRNPIP and SYN1. Mislocalized cytosolically exposed PrP interacts with MGRN1; this interaction alters MGRN1 subcellular location and causes lysosomal enlargement. Interacts with KIAA1191.

It localises to the cell membrane. The protein resides in the golgi apparatus. Its function is as follows. Its primary physiological function is unclear. Has cytoprotective activity against internal or environmental stresses. May play a role in neuronal development and synaptic plasticity. May be required for neuronal myelin sheath maintenance. May play a role in iron uptake and iron homeostasis. Soluble oligomers are toxic to cultured neuroblastoma cells and induce apoptosis (in vitro). Association with GPC1 (via its heparan sulfate chains) targets PRNP to lipid rafts. Also provides Cu(2+) or Zn(2+) for the ascorbate-mediated GPC1 deaminase degradation of its heparan sulfate side chains. The protein is Major prion protein (PRNP) of Sigmodon hispidus (Hispid cotton rat).